The sequence spans 336 residues: UDP-3-O-acylglucosamine N-acyltransferase (336 aa).

His233 (proton acceptor) is an active-site residue.

Belongs to the transferase hexapeptide repeat family. LpxD subfamily. In terms of assembly, homotrimer.

The enzyme catalyses a UDP-3-O-[(3R)-3-hydroxyacyl]-alpha-D-glucosamine + a (3R)-hydroxyacyl-[ACP] = a UDP-2-N,3-O-bis[(3R)-3-hydroxyacyl]-alpha-D-glucosamine + holo-[ACP] + H(+). It participates in bacterial outer membrane biogenesis; LPS lipid A biosynthesis. Its function is as follows. Catalyzes the N-acylation of UDP-3-O-acylglucosamine using 3-hydroxyacyl-ACP as the acyl donor. Is involved in the biosynthesis of lipid A, a phosphorylated glycolipid that anchors the lipopolysaccharide to the outer membrane of the cell. The protein is UDP-3-O-acylglucosamine N-acyltransferase of Helicobacter pylori (strain HPAG1).